The chain runs to 281 residues: Pantothenate synthetase (281 aa).

30-37 serves as a coordination point for ATP; that stretch reads MGYLHEGH. Catalysis depends on histidine 37, which acts as the Proton donor. Glutamine 60 lines the (R)-pantoate pocket. Position 60 (glutamine 60) interacts with beta-alanine. 146-149 serves as a coordination point for ATP; it reads GEKD. Glutamine 152 is a (R)-pantoate binding site. Residues isoleucine 175 and 183-186 each bind ATP; that span reads KSSR.

Belongs to the pantothenate synthetase family. As to quaternary structure, homodimer.

The protein localises to the cytoplasm. The enzyme catalyses (R)-pantoate + beta-alanine + ATP = (R)-pantothenate + AMP + diphosphate + H(+). Its pathway is cofactor biosynthesis; (R)-pantothenate biosynthesis; (R)-pantothenate from (R)-pantoate and beta-alanine: step 1/1. Catalyzes the condensation of pantoate with beta-alanine in an ATP-dependent reaction via a pantoyl-adenylate intermediate. The protein is Pantothenate synthetase of Ruminiclostridium cellulolyticum (strain ATCC 35319 / DSM 5812 / JCM 6584 / H10) (Clostridium cellulolyticum).